A 591-amino-acid chain; its full sequence is Paxillin (591 aa).

Met-1 carries the post-translational modification N-acetylmethionine. An LD motif 1 motif is present at residues 3–15 (DLDALLADLESTT). The segment at 17-138 (HISKRPVFLS…SSPTVMSTSL (122 aa)) is disordered. Tyr-31 carries the post-translational modification Phosphotyrosine; by PTK6. Positions 45–54 (VPPPVPPPPS) are enriched in pro residues. Positions 69-101 (WQPSGSRFIHQQPQSSSPVYGSSAKTSSVSNPQ) are enriched in polar residues. 2 positions are modified to phosphoserine: Ser-83 and Ser-85. Position 88 is a phosphotyrosine (Tyr-88). At Ser-106 the chain carries Phosphoserine. Phosphotyrosine; by PTK6 is present on Tyr-118. 3 positions are modified to phosphoserine: Ser-119, Ser-126, and Ser-130. A compositionally biased stretch (polar residues) spans 121–137 (PNKQKSAESSPTVMSTS). Thr-132 carries the post-translational modification Phosphothreonine. Ser-137, Ser-140, and Ser-143 each carry phosphoserine. The short motif at 144 to 156 (ELDRLLLELNAVQ) is the LD motif 2 element. Positions 156–213 (QHNPPGFPADEANSGPPLPGALSPHYGVPETNSPLGGKAGPLTKEKPKRNGGRGLEDV) are disordered. Tyr-181 is modified (phosphotyrosine). The LD motif 3 motif lies at 216 to 228 (SVESLLDELESSV). Ser-230 carries the post-translational modification Phosphoserine. The disordered stretch occupies residues 237-260 (VNQGEMSSPQRVTSTQQQTRISAS). Ser-244 bears the Phosphoserine; by CDK5 mark. A phosphoserine mark is found at Ser-250, Ser-258, Ser-261, and Ser-272. The short motif at 265-276 (ELDELMASLSDF) is the LD motif 4 element. Basic and acidic residues predominate over residues 289–300 (RCWAADWPRDGG). The tract at residues 289–335 (RCWAADWPRDGGRSSPGGQDEGGFMAQGKTGSSSPPGGPPKPGSQLD) is disordered. Residues Ser-303, Ser-322, Ser-332, and Ser-340 each carry the phosphoserine modification. Positions 333 to 345 (QLDSMLGSLQSDL) match the LD motif 5 motif. 4 LIM zinc-binding domains span residues 356–415 (GVCG…LFSP), 416–473 (RCYY…DMFA), 474–533 (PKCG…RRGS), and 534–591 (LCSG…KLFC). Ser-533 is subject to Phosphoserine.

The protein belongs to the paxillin family. In terms of assembly, binds to vinculin and to the SH3 domain of SRC. Interacts with GIT1, NUDT16L1/SDOS, PARVA, PARVB, SORBS1 and TGFB1I1. Component of cytoplasmic complexes, which also contain GIT1, ARHGEF6 and PAK1. Binds ASAP2. Interacts with RNF5 and PDCD10. Interacts with NEK3 and this interaction is prolactin-dependent. Interacts with PTK2/FAK1 and PTK2B/PYK2. Interacts with PTK6. Interacts with CD36. Interacts (via cytoplasmic domain) with CEACAM1; the interaction is phosphotyrosyl-dependent. Interacts with PXN; this complex stabilizes actin dynamics. Interacts with TRIM15. Interacts with PAK4; PAK4 acts as a scaffold to suppport PAXI phosphorylation at Ser-272. Post-translationally, phosphorylated by MAPK1/ERK2. Phosphorylated on tyrosine residues during integrin-mediated cell adhesion, embryonic development, fibroblast transformation and following stimulation of cells by mitogens. Phosphorylation at Ser-244 by CDK5 reduces its interaction with PTK2/FAK1 in matrix-cell focal adhesions (MCFA) during oligodendrocytes (OLs) differentiation. Phosphorylation at Tyr-31 and Tyr-118 by PTK6 promote the activation of RAC1 via CRK/CrKII, thereby promoting migration and invasion. Phosphorylation at Ser-250 by SLK is required for PXN redistribution and cell motility. Phosphorylation at Ser-272 promotes focal adhesion disassembly during cell migration.

Its subcellular location is the cytoplasm. It localises to the cytoskeleton. The protein localises to the cell junction. It is found in the focal adhesion. The protein resides in the cell cortex. In terms of biological role, cytoskeletal protein involved in actin-membrane attachment at sites of cell adhesion to the extracellular matrix (focal adhesion). Recruits other proteins such as TRIM15 to focal adhesion. This Pongo abelii (Sumatran orangutan) protein is Paxillin (PXN).